Reading from the N-terminus, the 185-residue chain is Ribosome-recycling factor (185 aa).

Belongs to the RRF family.

The protein resides in the cytoplasm. In terms of biological role, responsible for the release of ribosomes from messenger RNA at the termination of protein biosynthesis. May increase the efficiency of translation by recycling ribosomes from one round of translation to another. The protein is Ribosome-recycling factor of Shewanella sp. (strain W3-18-1).